A 208-amino-acid chain; its full sequence is Small ribosomal subunit protein uS4 (208 aa).

One can recognise an S4 RNA-binding domain in the interval 95–159; that stretch reads TIIDNIVYRA…LKKLIGSNIE (65 aa).

This sequence belongs to the universal ribosomal protein uS4 family. In terms of assembly, part of the 30S ribosomal subunit. Contacts protein S5. The interaction surface between S4 and S5 is involved in control of translational fidelity.

In terms of biological role, one of the primary rRNA binding proteins, it binds directly to 16S rRNA where it nucleates assembly of the body of the 30S subunit. With S5 and S12 plays an important role in translational accuracy. The chain is Small ribosomal subunit protein uS4 from Borreliella afzelii (strain PKo) (Borrelia afzelii).